The primary structure comprises 313 residues: Malate dehydrogenase (313 aa).

NAD(+) is bound by residues 11–16 (GAGSIG) and aspartate 35. The substrate site is built by arginine 84 and arginine 90. NAD(+) contacts are provided by residues asparagine 97 and 120–122 (VTN). Positions 122 and 153 each coordinate substrate. Histidine 177 functions as the Proton acceptor in the catalytic mechanism.

It belongs to the LDH/MDH superfamily. MDH type 3 family.

It catalyses the reaction (S)-malate + NAD(+) = oxaloacetate + NADH + H(+). Its function is as follows. Catalyzes the reversible oxidation of malate to oxaloacetate. In Ehrlichia chaffeensis (strain ATCC CRL-10679 / Arkansas), this protein is Malate dehydrogenase.